We begin with the raw amino-acid sequence, 129 residues long: Phosphoribosyl-AMP cyclohydrolase (129 aa).

D78 is a binding site for Mg(2+). C79 provides a ligand contact to Zn(2+). Mg(2+)-binding residues include D80 and D82. Zn(2+) contacts are provided by C96 and C103.

It belongs to the PRA-CH family. In terms of assembly, homodimer. Mg(2+) is required as a cofactor. The cofactor is Zn(2+).

It is found in the cytoplasm. It catalyses the reaction 1-(5-phospho-beta-D-ribosyl)-5'-AMP + H2O = 1-(5-phospho-beta-D-ribosyl)-5-[(5-phospho-beta-D-ribosylamino)methylideneamino]imidazole-4-carboxamide. The protein operates within amino-acid biosynthesis; L-histidine biosynthesis; L-histidine from 5-phospho-alpha-D-ribose 1-diphosphate: step 3/9. Its function is as follows. Catalyzes the hydrolysis of the adenine ring of phosphoribosyl-AMP. This is Phosphoribosyl-AMP cyclohydrolase from Nitrosomonas eutropha (strain DSM 101675 / C91 / Nm57).